A 404-amino-acid polypeptide reads, in one-letter code: Acetate kinase (404 aa).

Asn8 is a binding site for Mg(2+). Position 15 (Lys15) interacts with ATP. Residue Arg92 coordinates substrate. Asp149 serves as the catalytic Proton donor/acceptor. ATP-binding positions include 207 to 211, 282 to 284, and 327 to 331; these read HLGSG, DMR, and GIGEN. A Mg(2+)-binding site is contributed by Glu378.

The protein belongs to the acetokinase family. In terms of assembly, homodimer. Requires Mg(2+) as cofactor. The cofactor is Mn(2+).

It localises to the cytoplasm. It catalyses the reaction acetate + ATP = acetyl phosphate + ADP. The protein operates within metabolic intermediate biosynthesis; acetyl-CoA biosynthesis; acetyl-CoA from acetate: step 1/2. Catalyzes the formation of acetyl phosphate from acetate and ATP. Can also catalyze the reverse reaction. The polypeptide is Acetate kinase (Nitrobacter hamburgensis (strain DSM 10229 / NCIMB 13809 / X14)).